The primary structure comprises 203 residues: MGALKYLEELQKKKQSDVVRFLLRVRCWELRQLNVIHRASRPSRPDKARRLGYKAKQGYVIYRARVRRGGRKKPVPKGATYGKPTNQGVNQLKYQRSLKSTAEERVGRRCANLRVLNSYWINQDSTYKYFEVILVDPQHKAIRRDPRINWIVNPVHKHRESRGLTSTGKRSRGLNKGHRYNKTRAGRRKTWKRHNTLSLWRYR.

The disordered stretch occupies residues 160–186; sequence ESRGLTSTGKRSRGLNKGHRYNKTRAG. Residues 169-186 show a composition bias toward basic residues; sequence KRSRGLNKGHRYNKTRAG.

The protein belongs to the eukaryotic ribosomal protein eL15 family. In terms of assembly, component of the large ribosomal subunit (LSU). Mature N.crassa ribosomes consist of a small (40S) and a large (60S) subunit. The 40S small subunit contains 1 molecule of ribosomal RNA (18S rRNA) and at least 32 different proteins. The large 60S subunit contains 3 rRNA molecules (26S, 5.8S and 5S rRNA) and at least 42 different proteins.

The protein resides in the cytoplasm. Functionally, component of the ribosome, a large ribonucleoprotein complex responsible for the synthesis of proteins in the cell. The small ribosomal subunit (SSU) binds messenger RNAs (mRNAs) and translates the encoded message by selecting cognate aminoacyl-transfer RNA (tRNA) molecules. The large subunit (LSU) contains the ribosomal catalytic site termed the peptidyl transferase center (PTC), which catalyzes the formation of peptide bonds, thereby polymerizing the amino acids delivered by tRNAs into a polypeptide chain. The nascent polypeptides leave the ribosome through a tunnel in the LSU and interact with protein factors that function in enzymatic processing, targeting, and the membrane insertion of nascent chains at the exit of the ribosomal tunnel. The sequence is that of Large ribosomal subunit protein eL15 (rpl-15) from Neurospora crassa (strain ATCC 24698 / 74-OR23-1A / CBS 708.71 / DSM 1257 / FGSC 987).